The following is a 382-amino-acid chain: Chaperone protein DnaJ (382 aa).

The J domain occupies 5–70 (DYYELLGVQK…EKRAAYDRYG (66 aa)). The CR-type zinc-finger motif lies at 146–224 (GAEKEISFRK…CHGEGRVRRT (79 aa)). Positions 159, 162, 176, 179, 198, 201, 212, and 215 each coordinate Zn(2+). CXXCXGXG motif repeat units lie at residues 159–166 (CERCDGSG), 176–183 (CPTCRGAG), 198–205 (CPTCGGMG), and 212–219 (CTVCHGEG). The interval 230–250 (RIPPGVDNGSRLRSSGNGEAG) is disordered.

This sequence belongs to the DnaJ family. Homodimer. It depends on Zn(2+) as a cofactor.

Its subcellular location is the cytoplasm. Its function is as follows. Participates actively in the response to hyperosmotic and heat shock by preventing the aggregation of stress-denatured proteins and by disaggregating proteins, also in an autonomous, DnaK-independent fashion. Unfolded proteins bind initially to DnaJ; upon interaction with the DnaJ-bound protein, DnaK hydrolyzes its bound ATP, resulting in the formation of a stable complex. GrpE releases ADP from DnaK; ATP binding to DnaK triggers the release of the substrate protein, thus completing the reaction cycle. Several rounds of ATP-dependent interactions between DnaJ, DnaK and GrpE are required for fully efficient folding. Also involved, together with DnaK and GrpE, in the DNA replication of plasmids through activation of initiation proteins. This Opitutus terrae (strain DSM 11246 / JCM 15787 / PB90-1) protein is Chaperone protein DnaJ.